Reading from the N-terminus, the 418-residue chain is Cytochrome P450 monooxygenase ABA2 (418 aa).

Cysteine 355 is a binding site for heme.

This sequence belongs to the cytochrome P450 family. Heme serves as cofactor.

It participates in hormone biosynthesis. Cytochrome P450 monooxygenase involved in the biosynthesis of abscisic acid (ABA), a phytohormone that acts antagonistically toward salicylic acid (SA), jasmonic acid (JA) and ethylene (ETH) signaling, to impede plant defense responses. During pathogen-host interaction, ABA plays a dual role in disease severity by increasing plant susceptibility and accelerating pathogenesis in the fungus itself. The first step of the pathway catalyzes the reaction from farnesyl diphosphate to alpha-ionylideneethane performed by the alpha-ionylideneethane synthase ABA3 via a three-step reaction mechanism involving 2 neutral intermediates, beta-farnesene and allofarnesene. The cytochrome P450 monooxygenase ABA1 might then be involved in the conversion of alpha-ionylideneethane to alpha-ionylideneacetic acid. Alpha-ionylideneacetic acid is further converted to abscisic acid in 2 steps involving the cytochrome P450 monooxygenase ABA2 and the short-chain dehydrogenase/reductase ABA4, via the intermediates 1'-deoxy-ABA or 1',4'-trans-diol-ABA, depending on the order of action of these 2 enzymes. ABA2 is responsible for the hydroxylation of carbon atom C-1' and ABA4 might be involved in the oxidation of the C-4' carbon atom. This is Cytochrome P450 monooxygenase ABA2 from Pyricularia oryzae (strain Y34) (Rice blast fungus).